The primary structure comprises 82 residues: MPKRTLQGVVVSDKQAKTVVVRVDRRFTHPLYKKTIRRSKNYHAHDENNEFKPGDMVWIEESKPISKLKRWTVVRGEQKKTA.

This sequence belongs to the universal ribosomal protein uS17 family. As to quaternary structure, part of the 30S ribosomal subunit.

In terms of biological role, one of the primary rRNA binding proteins, it binds specifically to the 5'-end of 16S ribosomal RNA. This Nitrobacter hamburgensis (strain DSM 10229 / NCIMB 13809 / X14) protein is Small ribosomal subunit protein uS17.